A 739-amino-acid chain; its full sequence is Phosphoribosylformylglycinamidine synthase subunit PurL (739 aa).

Residue H53 is part of the active site. ATP-binding residues include Y56 and K95. A Mg(2+)-binding site is contributed by E97. Residues 98 to 101 (SHNH) and R120 each bind substrate. H99 functions as the Proton acceptor in the catalytic mechanism. D121 is a Mg(2+) binding site. Q244 is a substrate binding site. D274 serves as a coordination point for Mg(2+). 318 to 320 (ESQ) provides a ligand contact to substrate. D501 and G538 together coordinate ATP. N539 lines the Mg(2+) pocket. Residue S541 participates in substrate binding.

Belongs to the FGAMS family. As to quaternary structure, monomer. Part of the FGAM synthase complex composed of 1 PurL, 1 PurQ and 2 PurS subunits.

It is found in the cytoplasm. It catalyses the reaction N(2)-formyl-N(1)-(5-phospho-beta-D-ribosyl)glycinamide + L-glutamine + ATP + H2O = 2-formamido-N(1)-(5-O-phospho-beta-D-ribosyl)acetamidine + L-glutamate + ADP + phosphate + H(+). Its pathway is purine metabolism; IMP biosynthesis via de novo pathway; 5-amino-1-(5-phospho-D-ribosyl)imidazole from N(2)-formyl-N(1)-(5-phospho-D-ribosyl)glycinamide: step 1/2. Functionally, part of the phosphoribosylformylglycinamidine synthase complex involved in the purines biosynthetic pathway. Catalyzes the ATP-dependent conversion of formylglycinamide ribonucleotide (FGAR) and glutamine to yield formylglycinamidine ribonucleotide (FGAM) and glutamate. The FGAM synthase complex is composed of three subunits. PurQ produces an ammonia molecule by converting glutamine to glutamate. PurL transfers the ammonia molecule to FGAR to form FGAM in an ATP-dependent manner. PurS interacts with PurQ and PurL and is thought to assist in the transfer of the ammonia molecule from PurQ to PurL. This Listeria welshimeri serovar 6b (strain ATCC 35897 / DSM 20650 / CCUG 15529 / CIP 8149 / NCTC 11857 / SLCC 5334 / V8) protein is Phosphoribosylformylglycinamidine synthase subunit PurL.